The sequence spans 47 residues: Delta-halcutoxin-Hcg1a (47 aa).

3 cysteine pairs are disulfide-bonded: C3–C43, C5–C33, and C26–C44.

Belongs to the sea anemone sodium channel inhibitory toxin family. Type II subfamily.

Its subcellular location is the secreted. It is found in the nematocyst. Is potently lethal to crabs, although it showed neither lethal activity in mice nor hemolytic activity. May bind to voltage-gated sodium channels (Nav), thereby delaying their inactivation during signal transduction. This chain is Delta-halcutoxin-Hcg1a, found in Isohalcurias carlgreni (Sea anemone).